The primary structure comprises 169 residues: Putative phosphoesterase SERP0604 (169 aa).

His-34 functions as the Proton donor in the catalytic mechanism. Short sequence motifs (HXTX) lie at residues 34 to 37 and 115 to 118; these read HITI and HFTI. Catalysis depends on His-115, which acts as the Proton acceptor.

It belongs to the 2H phosphoesterase superfamily. YjcG family.

This chain is Putative phosphoesterase SERP0604, found in Staphylococcus epidermidis (strain ATCC 35984 / DSM 28319 / BCRC 17069 / CCUG 31568 / BM 3577 / RP62A).